Here is a 560-residue protein sequence, read N- to C-terminus: Diphtheria toxin (560 aa).

Residues 1 to 25 (MSRKLFASILIGALLGIGAPPSAHA) form the signal peptide. Residues His-46 and Tyr-90 each contribute to the NAD(+) site. The active site involves Glu-173. Intrachain disulfides connect Cys-211/Cys-226 and Cys-486/Cys-496.

Homodimer.

The catalysed reaction is diphthamide-[translation elongation factor 2] + NAD(+) = N-(ADP-D-ribosyl)diphthamide-[translation elongation factor 2] + nicotinamide + H(+). In terms of biological role, diphtheria toxin, produced by a phage infecting Corynebacterium diphtheriae, is a proenzyme that, after activation, catalyzes the covalent attachment of the ADP ribose moiety of NAD to elongation factor 2. Fragment A is responsible for enzymatic ADP-ribosylation of elongation factor 2, while fragment B is responsible for binding of toxin to cell receptors and entry of fragment A. This is Diphtheria toxin from Corynephage omega.